We begin with the raw amino-acid sequence, 980 residues long: Protein translocase subunit SecA (980 aa).

ATP contacts are provided by residues glutamine 109, 127–131 (GEGKT), and aspartate 529. A disordered region spans residues 954–980 (QKIGRNDPCPCGSGKKYKHCHGKDNPQ). Positions 962, 964, 973, and 974 each coordinate Zn(2+).

Belongs to the SecA family. As to quaternary structure, monomer and homodimer. Part of the essential Sec protein translocation apparatus which comprises SecA, SecYEG and auxiliary proteins SecDF. Other proteins may also be involved. The cofactor is Zn(2+).

It is found in the cell inner membrane. It localises to the cytoplasm. It catalyses the reaction ATP + H2O + cellular proteinSide 1 = ADP + phosphate + cellular proteinSide 2.. Part of the Sec protein translocase complex. Interacts with the SecYEG preprotein conducting channel. Has a central role in coupling the hydrolysis of ATP to the transfer of proteins into and across the cell membrane, serving as an ATP-driven molecular motor driving the stepwise translocation of polypeptide chains across the membrane. The sequence is that of Protein translocase subunit SecA from Brachyspira hyodysenteriae (strain ATCC 49526 / WA1).